The following is a 386-amino-acid chain: Zinc transporter 7-A (386 aa).

At 1–37 (MLPLSIKDDEYKPPKFNLARKVSGWIRSIFSDSTSRN) the chain is on the cytoplasmic side. A helical transmembrane segment spans residues 38 to 58 (LFCFLCLNLSFAFVELFYGIW). Over 59-67 (SNSLGLISD) the chain is Lumenal. The chain crosses the membrane as a helical span at residues 68–88 (SFHMFFDCTALLAGLAASVIS). The Cytoplasmic portion of the chain corresponds to 89–102 (RWKTNEAFSYGYVR). A helical membrane pass occupies residues 103–123 (AEVLAGFVNGLFLIFTAFFIF). The Lumenal segment spans residues 124–140 (SEGVERALDTPEVHHER). A helical transmembrane segment spans residues 141–161 (LLPVSIMGLLVNIIGIFVFQH). The tract at residues 161–222 (HGGGHGHSHE…GHSHDHSPKH (62 aa)) is his-rich loop. Over 162–246 (GGGHGHSHES…KGSSKQILEG (85 aa)) the chain is Cytoplasmic. Residues 167 to 239 (HSHESGHGHS…DEPPEEHKGS (73 aa)) form a disordered region. Over residues 228-238 (CHDEPPEEHKG) the composition is skewed to basic and acidic residues. Residues 247-267 (VFLHIVADTLGSVGVIFSTIL) traverse the membrane as a helical segment. Residues 268–272 (MQRYG) are Lumenal-facing. A helical membrane pass occupies residues 273-293 (LMIADPICSMLIALLIFVSVI). The Cytoplasmic segment spans residues 294–386 (PLLKQSIGIL…LYVQIDFAAI (93 aa)).

It belongs to the cation diffusion facilitator (CDF) transporter (TC 2.A.4) family. SLC30A subfamily. In terms of assembly, homooligomer.

It is found in the golgi apparatus membrane. Its subcellular location is the cytoplasmic vesicle. The protein resides in the golgi apparatus. It localises to the trans-Golgi network. The protein localises to the sarcoplasmic reticulum. It is found in the mitochondrion. The enzyme catalyses Zn(2+)(in) = Zn(2+)(out). Zinc ion transporter mediating zinc entry from the cytosol into the lumen of organelles along the secretory pathway. By contributing to zinc ion homeostasis within the early secretory pathway, regulates the activation and folding of enzymes like alkaline phosphatases. This Xenopus laevis (African clawed frog) protein is Zinc transporter 7-A (slc30a7-a).